The primary structure comprises 493 residues: EGF-containing fibulin-like extracellular matrix protein 1 (493 aa).

Positions Met-1–Ser-17 are cleaved as a signal peptide. One can recognise an EGF-like 1; atypical domain in the interval Tyr-26 to Leu-71. An EGF-like 2; calcium-binding domain is found at Asp-173–Val-213. Cystine bridges form between Cys-177–Cys-190, Cys-184–Cys-199, Cys-201–Cys-212, Cys-218–Cys-228, Cys-224–Cys-237, Cys-239–Cys-252, Cys-258–Cys-268, Cys-264–Cys-277, Cys-279–Cys-292, Cys-298–Cys-309, Cys-305–Cys-318, Cys-320–Cys-332, Cys-338–Cys-350, Cys-344–Cys-359, and Cys-365–Cys-377. The EGF-like 3; calcium-binding domain occupies Asp-214 to Val-253. Residue Asn-249 is glycosylated (N-linked (GlcNAc...) asparagine). Positions Asp-254–Glu-293 constitute an EGF-like 4; calcium-binding domain. The tract at residues Asp-259 to Phe-493 is mediates interaction with TIMP3. An EGF-like 5; calcium-binding domain is found at Asp-294 to Gln-333. Positions Asp-334–Val-378 constitute an EGF-like 6; calcium-binding domain.

Belongs to the fibulin family. As to quaternary structure, interacts with ECM1. Interacts with TIMP3. In terms of tissue distribution, expressed by olfactory ensheathing cells (at protein level). Detected in lung, intestine and kidney.

It is found in the secreted. The protein resides in the extracellular space. It localises to the extracellular matrix. Its function is as follows. Binds EGFR, the EGF receptor, inducing EGFR autophosphorylation and the activation of downstream signaling pathways. May play a role in cell adhesion and migration. May function as a negative regulator of chondrocyte differentiation. In the olfactory epithelium, it may regulate glial cell migration, differentiation and the ability of glial cells to support neuronal neurite outgrowth. In Rattus norvegicus (Rat), this protein is EGF-containing fibulin-like extracellular matrix protein 1 (Efemp1).